A 451-amino-acid chain; its full sequence is UDP-glycosyltransferase 13 (451 aa).

Catalysis depends on H15, which acts as the Proton acceptor. Position 15 (H15) interacts with an anthocyanidin. The active-site Charge relay is D93. Residues A326, Q328, H343, W346, N347, S348, and E351 each coordinate UDP-alpha-D-glucose. A366 lines the an anthocyanidin pocket. UDP-alpha-D-glucose contacts are provided by E367 and Q368.

This sequence belongs to the UDP-glycosyltransferase family. In terms of tissue distribution, expressed in roots. Detected in stems and leaves.

The catalysed reaction is a 7-hydroxyisoflavone + UDP-alpha-D-glucose = a 7-hydroxyisoflavone 7-O-beta-D-glucoside + UDP + H(+). In terms of biological role, isoflavone 7-O-glucosyltransferase converting daidzein to daidzin, genistein to genistin and formononetin to ononin. Shows some activity toward the flavanones liquiritigenin and naringenin, but not toward cyanidin, isoliquiritigenin, apigenin, luteolin, kaempferol, quercetin, daidzin and puerarin. This Pueraria montana var. lobata (Kudzu vine) protein is UDP-glycosyltransferase 13.